Reading from the N-terminus, the 369-residue chain is Cellular tumor antigen p53 (369 aa).

The interval 1–28 (MAESQEFAELWERNLISTQEAGTCWELI) is transcription activation (acidic). A DNA-binding region spans residues 66-256 (DYPGEHGFKL…KTEESNFRKD (191 aa)). Zn(2+)-binding residues include C140, H143, C202, and C206. The interaction with DNA stretch occupies residues 237 to 244 (RVCACPGR). The segment covering 246-263 (RKTEESNFRKDQETKTLD) has biased composition (basic and acidic residues). Disordered regions lie at residues 246 to 296 (RKTE…SGSS) and 318 to 369 (NDSL…SDSD). Polar residues predominate over residues 269 to 281 (NKRSLTKDSTSSV). Positions 270–289 (KRSLTKDSTSSVPRPEGSKK) match the Bipartite nuclear localization signal motif. The oligomerization stretch occupies residues 298–329 (EEIYTLQVRGKERYEMLKKINDSLELSDVVPP). The Nuclear export signal signature appears at 312 to 323 (EMLKKINDSLEL). The interval 342–365 (KGKKKDGQTPEPKRGKKLMVKDEK) is basic (repression of DNA-binding). The segment covering 346–369 (KDGQTPEPKRGKKLMVKDEKSDSD) has biased composition (basic and acidic residues).

This sequence belongs to the p53 family. Binds DNA as a homotetramer. Zn(2+) is required as a cofactor.

The protein localises to the cytoplasm. It is found in the nucleus. Multifunctional transcription factor that induces cell cycle arrest, DNA repair or apoptosis upon binding to its target DNA sequence. Acts as a tumor suppressor in many tumor types; induces growth arrest or apoptosis depending on the physiological circumstances and cell type. Negatively regulates cell division by controlling expression of a set of genes required for this process. One of the activated genes is an inhibitor of cyclin-dependent kinases. Apoptosis induction seems to be mediated either by stimulation of BAX and FAS antigen expression, or by repression of Bcl-2 expression. This Barbus barbus (Barbel) protein is Cellular tumor antigen p53 (tp53).